A 288-amino-acid polypeptide reads, in one-letter code: Purine nucleoside phosphorylase (288 aa).

Phosphate is bound at residue 65–66 (RN). Position 201 (methionine 201) interacts with substrate. Residue threonine 202 coordinates phosphate.

It belongs to the PNP/MTAP phosphorylase family. MTAP subfamily. Homotrimer.

The protein resides in the cytoplasm. The protein localises to the nucleus. The catalysed reaction is a purine D-ribonucleoside + phosphate = a purine nucleobase + alpha-D-ribose 1-phosphate. The protein operates within purine metabolism; purine nucleoside salvage. Its function is as follows. Purine nucleoside phosphorylase involved in purine salvage. This Drosophila pseudoobscura pseudoobscura (Fruit fly) protein is Purine nucleoside phosphorylase.